The sequence spans 318 residues: Isoaspartyl peptidase/L-asparaginase (318 aa).

The active-site Nucleophile is the threonine 180. Substrate-binding positions include 208–211 (RVSD) and 229–232 (TGIG).

It belongs to the Ntn-hydrolase family. As to quaternary structure, heterotetramer of two alpha and two beta chains arranged as a dimer of alpha/beta heterodimers. Post-translationally, cleaved into an alpha and beta chain by autocatalysis; this activates the enzyme. The N-terminal residue of the beta subunit is responsible for the nucleophile hydrolase activity.

It carries out the reaction Cleavage of a beta-linked Asp residue from the N-terminus of a polypeptide.. Functionally, degrades proteins damaged by L-isoaspartyl residue formation (also known as beta-Asp residues). Probably performs the final step in the degradation of the reserve polymer cyanophycin (depolymerizes the building block L-beta-Asp-Arg). Also has L-asparaginase activity. The protein is Isoaspartyl peptidase/L-asparaginase of Nostoc sp. (strain PCC 7120 / SAG 25.82 / UTEX 2576).